The following is a 426-amino-acid chain: Mediator of RNA polymerase II transcription subunit 1 (426 aa).

Positions 324-356 are disordered; sequence VGDAPAPAAQPPLHRRRSSNKGCRRASAAESAT. A compositionally biased stretch (basic residues) spans 336–347; that stretch reads LHRRRSSNKGCR.

Belongs to the Mediator complex subunit 1 family. Component of the Mediator complex.

Its subcellular location is the nucleus. Functionally, component of the Mediator complex, a coactivator involved in the regulated transcription of nearly all RNA polymerase II-dependent genes. Mediator functions as a bridge to convey information from gene-specific regulatory proteins to the basal RNA polymerase II transcription machinery. Mediator is recruited to promoters by direct interactions with regulatory proteins and serves as a scaffold for the assembly of a functional preinitiation complex with RNA polymerase II and the general transcription factors. This is Mediator of RNA polymerase II transcription subunit 1 (MED1) from Eremothecium gossypii (strain ATCC 10895 / CBS 109.51 / FGSC 9923 / NRRL Y-1056) (Yeast).